Reading from the N-terminus, the 544-residue chain is Chaperonin GroEL (544 aa).

Residues 29 to 32, 86 to 90, glycine 413, 476 to 478, and aspartate 492 contribute to the ATP site; these read TLGP, DGTTT, and NAA.

Belongs to the chaperonin (HSP60) family. In terms of assembly, forms a cylinder of 14 subunits composed of two heptameric rings stacked back-to-back. Interacts with the co-chaperonin GroES.

It localises to the cytoplasm. The catalysed reaction is ATP + H2O + a folded polypeptide = ADP + phosphate + an unfolded polypeptide.. Functionally, together with its co-chaperonin GroES, plays an essential role in assisting protein folding. The GroEL-GroES system forms a nano-cage that allows encapsulation of the non-native substrate proteins and provides a physical environment optimized to promote and accelerate protein folding. This Bacillus pumilus (strain SAFR-032) protein is Chaperonin GroEL.